The primary structure comprises 62 residues: Large ribosomal subunit protein bL28 (62 aa).

Belongs to the bacterial ribosomal protein bL28 family.

This chain is Large ribosomal subunit protein bL28, found in Streptococcus agalactiae serotype Ia (strain ATCC 27591 / A909 / CDC SS700).